The sequence spans 476 residues: Glutamate--tRNA ligase (476 aa).

The 'HIGH' region signature appears at 9 to 19 (PSPTGKLHIGT). Residues 109-129 (REEQKSRNKPPRYDNRHRSLS) are compositionally biased toward basic and acidic residues. The disordered stretch occupies residues 109 to 133 (REEQKSRNKPPRYDNRHRSLSTEEE). The short motif at 248 to 252 (KLSKR) is the 'KMSKS' region element. ATP is bound at residue Lys-251.

Belongs to the class-I aminoacyl-tRNA synthetase family. Glutamate--tRNA ligase type 1 subfamily. In terms of assembly, monomer.

The protein localises to the cytoplasm. The catalysed reaction is tRNA(Glu) + L-glutamate + ATP = L-glutamyl-tRNA(Glu) + AMP + diphosphate. Catalyzes the attachment of glutamate to tRNA(Glu) in a two-step reaction: glutamate is first activated by ATP to form Glu-AMP and then transferred to the acceptor end of tRNA(Glu). The sequence is that of Glutamate--tRNA ligase from Prochlorococcus marinus (strain MIT 9211).